Here is a 414-residue protein sequence, read N- to C-terminus: Enolase (414 aa).

Q162 lines the (2R)-2-phosphoglycerate pocket. The active-site Proton donor is E204. Mg(2+) contacts are provided by D239, E280, and D307. Positions 332, 361, 362, and 383 each coordinate (2R)-2-phosphoglycerate. Catalysis depends on K332, which acts as the Proton acceptor.

This sequence belongs to the enolase family. It depends on Mg(2+) as a cofactor.

It is found in the cytoplasm. It localises to the secreted. The protein localises to the cell surface. The catalysed reaction is (2R)-2-phosphoglycerate = phosphoenolpyruvate + H2O. Its pathway is carbohydrate degradation; glycolysis; pyruvate from D-glyceraldehyde 3-phosphate: step 4/5. Its function is as follows. Catalyzes the reversible conversion of 2-phosphoglycerate (2-PG) into phosphoenolpyruvate (PEP). It is essential for the degradation of carbohydrates via glycolysis. This is Enolase from Campylobacter lari (strain RM2100 / D67 / ATCC BAA-1060).